The primary structure comprises 268 residues: Undecaprenyl-diphosphatase (268 aa).

The next 7 membrane-spanning stretches (helical) occupy residues 5–25 (SIIS…IPVS), 43–63 (GNTF…LVYF), 84–104 (FSVL…HGFI), 107–127 (VLFE…IILY), 184–204 (AAEF…ALDL), 213–233 (FDDV…GIFV), and 248–268 (PFAI…WLLG).

This sequence belongs to the UppP family.

The protein resides in the cell inner membrane. The catalysed reaction is di-trans,octa-cis-undecaprenyl diphosphate + H2O = di-trans,octa-cis-undecaprenyl phosphate + phosphate + H(+). Functionally, catalyzes the dephosphorylation of undecaprenyl diphosphate (UPP). Confers resistance to bacitracin. The sequence is that of Undecaprenyl-diphosphatase from Rhizobium meliloti (strain 1021) (Ensifer meliloti).